Consider the following 590-residue polypeptide: Aspartate--tRNA ligase (590 aa).

Glu-174 contacts L-aspartate. The interval 198–201 (QLMK) is aspartate. Residue Arg-220 participates in L-aspartate binding. ATP-binding positions include 220–222 (RDE) and Gln-229. His-443 is a binding site for L-aspartate. Glu-484 contributes to the ATP binding site. Residue Arg-491 participates in L-aspartate binding. Residue 536 to 539 (GLDR) participates in ATP binding.

The protein belongs to the class-II aminoacyl-tRNA synthetase family. Type 1 subfamily. As to quaternary structure, homodimer.

It is found in the cytoplasm. It catalyses the reaction tRNA(Asp) + L-aspartate + ATP = L-aspartyl-tRNA(Asp) + AMP + diphosphate. In terms of biological role, catalyzes the attachment of L-aspartate to tRNA(Asp) in a two-step reaction: L-aspartate is first activated by ATP to form Asp-AMP and then transferred to the acceptor end of tRNA(Asp). This is Aspartate--tRNA ligase from Lactococcus lactis subsp. lactis (strain IL1403) (Streptococcus lactis).